Reading from the N-terminus, the 487-residue chain is L-tartrate/succinate antiporter (487 aa).

The next 14 membrane-spanning stretches (helical) occupy residues 10 to 30, 33 to 53, 54 to 74, 93 to 113, 137 to 157, 189 to 209, 236 to 256, 292 to 312, 313 to 333, 340 to 360, 370 to 390, 393 to 413, 418 to 438, and 465 to 485; these read YLAP…AGLE, TWLY…EPVP, GAVV…WLLF, WAVS…FMFG, TLFL…VTPS, IGSY…AIFL, FLGM…LAYV, LMVG…AAMV, GYSV…DIVS, VFFW…TGFI, SLSG…FYLL, FFAS…AAAL, IPLP…SILT, and IFGL…MPVV.

This sequence belongs to the SLC13A/DASS transporter (TC 2.A.47) family. DIT1 subfamily.

It is found in the cell inner membrane. It catalyses the reaction (2R,3R)-tartrate(out) + succinate(in) = (2R,3R)-tartrate(in) + succinate(out). Its function is as follows. Catalyzes the uptake of tartrate in exchange for intracellular succinate. Essential for anaerobic L-tartrate fermentation. The chain is L-tartrate/succinate antiporter (ttdT) from Shigella flexneri.